The following is a 77-amino-acid chain: Small, acid-soluble spore protein Tlp (77 aa).

Belongs to the Tlp family.

It localises to the spore core. The polypeptide is Small, acid-soluble spore protein Tlp (Geobacillus sp. (strain WCH70)).